Consider the following 504-residue polypeptide: 26S proteasome non-ATPase regulatory subunit 3 (504 aa).

One can recognise a PCI domain in the interval 254–433 (ARYMYYQGRI…RDGPRYMQSS (180 aa)).

This sequence belongs to the proteasome subunit S3 family. As to quaternary structure, the 26S proteasome is composed of a core protease, known as the 20S proteasome, capped at one or both ends by the 19S regulatory complex (RC). The RC is composed of at least 18 different subunits in two subcomplexes, the base and the lid, which form the portions proximal and distal to the 20S proteolytic core, respectively.

Its function is as follows. Acts as a regulatory subunit of the 26 proteasome which is involved in the ATP-dependent degradation of ubiquitinated proteins. The polypeptide is 26S proteasome non-ATPase regulatory subunit 3 (rpn-3) (Caenorhabditis elegans).